The following is a 381-amino-acid chain: Queuine tRNA-ribosyltransferase (381 aa).

D89 functions as the Proton acceptor in the catalytic mechanism. Residues 89–93 (DSGGF), D143, Q187, and G214 contribute to the substrate site. The tract at residues 245–251 (GVGKPED) is RNA binding. D264 functions as the Nucleophile in the catalytic mechanism. The segment at 269-273 (TRNAR) is RNA binding; important for wobble base 34 recognition. C302, C304, C307, and H333 together coordinate Zn(2+).

Belongs to the queuine tRNA-ribosyltransferase family. Homodimer. Within each dimer, one monomer is responsible for RNA recognition and catalysis, while the other monomer binds to the replacement base PreQ1. Zn(2+) serves as cofactor.

The catalysed reaction is 7-aminomethyl-7-carbaguanine + guanosine(34) in tRNA = 7-aminomethyl-7-carbaguanosine(34) in tRNA + guanine. Its pathway is tRNA modification; tRNA-queuosine biosynthesis. Its function is as follows. Catalyzes the base-exchange of a guanine (G) residue with the queuine precursor 7-aminomethyl-7-deazaguanine (PreQ1) at position 34 (anticodon wobble position) in tRNAs with GU(N) anticodons (tRNA-Asp, -Asn, -His and -Tyr). Catalysis occurs through a double-displacement mechanism. The nucleophile active site attacks the C1' of nucleotide 34 to detach the guanine base from the RNA, forming a covalent enzyme-RNA intermediate. The proton acceptor active site deprotonates the incoming PreQ1, allowing a nucleophilic attack on the C1' of the ribose to form the product. After dissociation, two additional enzymatic reactions on the tRNA convert PreQ1 to queuine (Q), resulting in the hypermodified nucleoside queuosine (7-(((4,5-cis-dihydroxy-2-cyclopenten-1-yl)amino)methyl)-7-deazaguanosine). This chain is Queuine tRNA-ribosyltransferase, found in Pectobacterium atrosepticum (strain SCRI 1043 / ATCC BAA-672) (Erwinia carotovora subsp. atroseptica).